Here is a 420-residue protein sequence, read N- to C-terminus: Beta-arrestin-2 (420 aa).

Phosphotyrosine is present on Tyr48. Residues Pro176 and Pro181 each carry the hydroxyproline; by PHD2 modification. The interval Ala240–Gly409 is interaction with TRAF6. Ser360 bears the Phosphoserine mark. The tract at residues Pro374–Cys420 is interaction with AP2B1. A Phosphothreonine modification is found at Thr393. Positions Asp396 to Arg406 match the [DE]-X(1,2)-F-X-X-[FL]-X-X-X-R motif motif.

It belongs to the arrestin family. Homooligomer; the self-association is mediated by InsP6-binding. Heterooligomer with ARRB1; the association is mediated by InsP6-binding. Interacts with ADRB2 and CHRM2. Interacts with PDE4A. Interacts with PDE4D. Interacts with MAPK10, MAPK1 and MAPK3. Interacts with DRD2. Interacts with FSHR. Interacts with CLTC. Interacts with HTR2C. Interacts with CRR5. Interacts with CXCR4. Interacts with SRC. Interacts with DUSP16; the interaction is interrupted by stimulation of AGTR1 and activation of MAPK10. Interacts with CHUK; the interaction is enhanced stimulation of ADRB2. Interacts with RELA. Interacts with MDM2; the interaction is enhanced by activation of GPCRs. Interacts with SLC9A5. Interacts with TRAF6. Interacts with IGF1R. Interacts with ENG. Interacts with KIR2DL1, KIR2DL3 and KIR2DL4. Interacts with LDLR. Interacts with AP2B1. Interacts with C5AR1. Interacts with RAF1. Interacts with MAP2K1. Interacts with MAPK1. Interacts with MAPK10; the interaction enhances MAPK10 activation by MAP3K5. Interacts with MAP2K4; the interaction is enhanced by presence of MAP3K5 and MAPK10. Interacts with MAP3K5. Interacts with AKT1. Interacts with IKBKB and MAP3K14. Interacts with SMO (activated). Interacts with GSK3A and GSK3B. Associates with protein phosphatase 2A (PP2A). Interacts with CXCR4; the interaction is dependent on C-terminal phosphorylation of CXCR4 and allows activation of MAPK1 and MAPK3. Interacts with GPR143. Interacts with HCK and CXCR1 (phosphorylated). Interacts with ACKR3 and ACKR4. Interacts with ARRDC1; the interaction is direct. Interacts with GPR61, GPR62 and GPR135. Interacts (via NACHT and LRR domains) with NLRP3; this interaction is direct and inducible by omega-3 polyunsaturated fatty acids (PUFAs). Interacts with FFAR4 (via C-terminus); this interaction is stimulated by long-chain fatty acids (LCFAs). Interacts with GPR35. Interacts with GPR84. Interacts with TIGIT; this interaction inhibits the NF-kappa-B pathway. Interacts with TGFBR3. Post-translationally, phosphorylated at Thr-382 in the cytoplasm; probably dephosphorylated at the plasma membrane. The phosphorylation does not regulate internalization and recycling of ADRB2, interaction with clathrin or AP2B1. In terms of processing, the ubiquitination status appears to regulate the formation and trafficking of beta-arrestin-GPCR complexes and signaling. Ubiquitination appears to occur GPCR-specific. Ubiquitinated by MDM2; the ubiquitination is required for rapid internalization of ADRB2. Deubiquitinated by USP33; the deubiquitination leads to a dissociation of the beta-arrestin-GPCR complex. Stimulation of a class A GPCR, such as ADRB2, induces transient ubiquitination and subsequently promotes association with USP33. Stimulation of a class B GPCR promotes a sustained ubiquitination. Deubiquitinated by USP20; allowing USP20 to deubiquitinate TRAF6 leading to inhibition of NF-kappa-B signaling. Hydroxylation by PHD2 modulates the rate of internalization by slowing down recruitment to the plasma membrane and inhibiting subsequent co-internalization with class A receptors. As to expression, found in a variety of tissues. The short isoform is the most abundant form in all tissues.

Its subcellular location is the cytoplasm. It localises to the nucleus. The protein resides in the cell membrane. It is found in the membrane. The protein localises to the clathrin-coated pit. Its subcellular location is the cytoplasmic vesicle. Its function is as follows. Functions in regulating agonist-mediated G-protein coupled receptor (GPCR) signaling by mediating both receptor desensitization and resensitization processes. During homologous desensitization, beta-arrestins bind to the GPRK-phosphorylated receptor and sterically preclude its coupling to the cognate G-protein; the binding appears to require additional receptor determinants exposed only in the active receptor conformation. The beta-arrestins target many receptors for internalization by acting as endocytic adapters (CLASPs, clathrin-associated sorting proteins) and recruiting the GPRCs to the adapter protein 2 complex 2 (AP-2) in clathrin-coated pits (CCPs). However, the extent of beta-arrestin involvement appears to vary significantly depending on the receptor, agonist and cell type. Internalized arrestin-receptor complexes traffic to intracellular endosomes, where they remain uncoupled from G-proteins. Two different modes of arrestin-mediated internalization occur. Class A receptors, like ADRB2, OPRM1, ENDRA, D1AR and ADRA1B dissociate from beta-arrestin at or near the plasma membrane and undergo rapid recycling. Class B receptors, like AVPR2, AGTR1, NTSR1, TRHR and TACR1 internalize as a complex with arrestin and traffic with it to endosomal vesicles, presumably as desensitized receptors, for extended periods of time. Receptor resensitization then requires that receptor-bound arrestin is removed so that the receptor can be dephosphorylated and returned to the plasma membrane. Mediates endocytosis of CCR7 following ligation of CCL19 but not CCL21. Involved in internalization of P2RY1, P2RY4, P2RY6 and P2RY11 and ATP-stimulated internalization of P2RY2. Involved in phosphorylation-dependent internalization of OPRD1 and subsequent recycling or degradation. Involved in ubiquitination of IGF1R. Beta-arrestins function as multivalent adapter proteins that can switch the GPCR from a G-protein signaling mode that transmits short-lived signals from the plasma membrane via small molecule second messengers and ion channels to a beta-arrestin signaling mode that transmits a distinct set of signals that are initiated as the receptor internalizes and transits the intracellular compartment. Acts as a signaling scaffold for MAPK pathways such as MAPK1/3 (ERK1/2) and MAPK10 (JNK3). ERK1/2 and JNK3 activated by the beta-arrestin scaffold are largely excluded from the nucleus and confined to cytoplasmic locations such as endocytic vesicles, also called beta-arrestin signalosomes. Acts as a signaling scaffold for the AKT1 pathway. GPCRs for which the beta-arrestin-mediated signaling relies on both ARRB1 and ARRB2 (codependent regulation) include ADRB2, F2RL1 and PTH1R. For some GPCRs the beta-arrestin-mediated signaling relies on either ARRB1 or ARRB2 and is inhibited by the other respective beta-arrestin form (reciprocal regulation). Increases ERK1/2 signaling in AGTR1- and AVPR2-mediated activation (reciprocal regulation). Involved in CCR7-mediated ERK1/2 signaling involving ligand CCL19. Is involved in type-1A angiotensin II receptor/AGTR1-mediated ERK activity. Is involved in type-1A angiotensin II receptor/AGTR1-mediated MAPK10 activity. Is involved in dopamine-stimulated AKT1 activity in the striatum by disrupting the association of AKT1 with its negative regulator PP2A. Involved in AGTR1-mediated chemotaxis. Appears to function as signaling scaffold involved in regulation of MIP-1-beta-stimulated CCR5-dependent chemotaxis. Involved in attenuation of NF-kappa-B-dependent transcription in response to GPCR or cytokine stimulation by interacting with and stabilizing CHUK. Suppresses UV-induced NF-kappa-B-dependent activation by interacting with CHUK. The function is promoted by stimulation of ADRB2 and dephosphorylation of ARRB2. Involved in p53/TP53-mediated apoptosis by regulating MDM2 and reducing the MDM2-mediated degradation of p53/TP53. May serve as nuclear messenger for GPCRs. Upon stimulation of OR1D2, may be involved in regulation of gene expression during the early processes of fertilization. Also involved in regulation of receptors other than GPCRs. Involved in endocytosis of TGFBR2 and TGFBR3 and down-regulates TGF-beta signaling such as NF-kappa-B activation. Involved in endocytosis of low-density lipoprotein receptor/LDLR. Involved in endocytosis of smoothened homolog/Smo, which also requires GRK2. Involved in endocytosis of SLC9A5. Involved in endocytosis of ENG and subsequent TGF-beta-mediated ERK activation and migration of epithelial cells. Involved in Toll-like receptor and IL-1 receptor signaling through the interaction with TRAF6 which prevents TRAF6 autoubiquitination and oligomerization required for activation of NF-kappa-B and JUN. Involved in insulin resistance by acting as insulin-induced signaling scaffold for SRC, AKT1 and INSR. Involved in regulation of inhibitory signaling of natural killer cells by recruiting PTPN6 and PTPN11 to KIR2DL1. Involved in IL8-mediated granule release in neutrophils. Involved in the internalization of the atypical chemokine receptor ACKR3. Acts as an adapter protein coupling FFAR4 receptor to specific downstream signaling pathways, as well as mediating receptor endocytosis. During the activation step of NLRP3 inflammasome, directly associates with NLRP3 leading to inhibition of pro-inflammatory cytokine release and inhibition of inflammation. The polypeptide is Beta-arrestin-2 (ARRB2) (Bos taurus (Bovine)).